The primary structure comprises 444 residues: Aspartate--tRNA(Asp/Asn) ligase (444 aa).

Glutamate 176 lines the L-aspartate pocket. Positions 198-201 are aspartate; the sequence is QLFK. Position 220 (arginine 220) interacts with L-aspartate. Residues 220 to 222, 228 to 230, and glutamate 367 each bind ATP; these read RAE and RHL. The Mg(2+) site is built by glutamate 367 and serine 370. The L-aspartate site is built by serine 370 and arginine 374. 415-418 contributes to the ATP binding site; sequence GCER.

It belongs to the class-II aminoacyl-tRNA synthetase family. Type 2 subfamily. As to quaternary structure, homodimer. The cofactor is Mg(2+).

The protein resides in the cytoplasm. It catalyses the reaction tRNA(Asx) + L-aspartate + ATP = L-aspartyl-tRNA(Asx) + AMP + diphosphate. Its function is as follows. Aspartyl-tRNA synthetase with relaxed tRNA specificity since it is able to aspartylate not only its cognate tRNA(Asp) but also tRNA(Asn). Reaction proceeds in two steps: L-aspartate is first activated by ATP to form Asp-AMP and then transferred to the acceptor end of tRNA(Asp/Asn). The polypeptide is Aspartate--tRNA(Asp/Asn) ligase (Methanosarcina acetivorans (strain ATCC 35395 / DSM 2834 / JCM 12185 / C2A)).